We begin with the raw amino-acid sequence, 96 residues long: Integration host factor subunit beta (96 aa).

It belongs to the bacterial histone-like protein family. Heterodimer of an alpha and a beta chain.

Its function is as follows. This protein is one of the two subunits of integration host factor, a specific DNA-binding protein that functions in genetic recombination as well as in transcriptional and translational control. This is Integration host factor subunit beta from Methylocella silvestris (strain DSM 15510 / CIP 108128 / LMG 27833 / NCIMB 13906 / BL2).